The sequence spans 236 residues: 2-C-methyl-D-erythritol 4-phosphate cytidylyltransferase (236 aa).

The protein belongs to the IspD/TarI cytidylyltransferase family. IspD subfamily. In terms of assembly, homodimer.

It catalyses the reaction 2-C-methyl-D-erythritol 4-phosphate + CTP + H(+) = 4-CDP-2-C-methyl-D-erythritol + diphosphate. It participates in isoprenoid biosynthesis; isopentenyl diphosphate biosynthesis via DXP pathway; isopentenyl diphosphate from 1-deoxy-D-xylulose 5-phosphate: step 2/6. In terms of biological role, catalyzes the formation of 4-diphosphocytidyl-2-C-methyl-D-erythritol from CTP and 2-C-methyl-D-erythritol 4-phosphate (MEP). In Escherichia coli O7:K1 (strain IAI39 / ExPEC), this protein is 2-C-methyl-D-erythritol 4-phosphate cytidylyltransferase.